Consider the following 485-residue polypeptide: MFAHTALRQRCAKWLFATGLFLLLGACVEKPSTLERVKEDGVLRVITRNSPATYFQDRNGETGFEYELVQHFAEDLGVKLQIETADNLDELYDALGKPSGPVLAAAGLVSSERRKAQVKYSHPYLEVTPQVIYRNGRPRPTNAKGLVGKKIMVLKGSSHADLLAELKKQNPGLEYEESDAVEVVDLLRMVDEGQIDLTLVDSNELAMNQVYFPNVRVAFDVGDTRDQRWAVAAGEDNSLLNEINEFLDKAQKNGTLQRLKDRYYGHVDVLGYVGAYTFAQHLQQRLPKYEKHFKSYAKVEQVDWRLLAAIGYQESMWQPEVTSKTGVRGLMMLTQRTAQAMGVSNRLDPKQSIQGGAKYFMKIKEELDDSIQEPDRTWFALAAYNVGTGHLEDARTLAKREKLNPNKWLDVKKMLPRLSQKQWYRQTKYGYARGGEPVHFVANIRRYYDILTWVTQPQLEGQVAEGNLHVPGVNKDKPADQSPPM.

Residues 1–29 (MFAHTALRQRCAKWLFATGLFLLLGACVE) form the signal peptide. The non-LT domain stretch occupies residues 30-267 (KPSTLERVKE…RLKDRYYGHV (238 aa)). Positions 268 to 485 (DVLGYVGAYT…DKPADQSPPM (218 aa)) are LT domain. Residue glutamate 314 is part of the active site. The tract at residues 465-485 (EGNLHVPGVNKDKPADQSPPM) is disordered.

This sequence in the N-terminal section; belongs to the bacterial solute-binding protein 3 family. It in the C-terminal section; belongs to the transglycosylase Slt family.

The protein localises to the cell outer membrane. It carries out the reaction Exolytic cleavage of the (1-&gt;4)-beta-glycosidic linkage between N-acetylmuramic acid (MurNAc) and N-acetylglucosamine (GlcNAc) residues in peptidoglycan, from either the reducing or the non-reducing ends of the peptidoglycan chains, with concomitant formation of a 1,6-anhydrobond in the MurNAc residue.. In terms of biological role, murein-degrading enzyme that degrades murein glycan strands and insoluble, high-molecular weight murein sacculi, with the concomitant formation of a 1,6-anhydromuramoyl product. Lytic transglycosylases (LTs) play an integral role in the metabolism of the peptidoglycan (PG) sacculus. Their lytic action creates space within the PG sacculus to allow for its expansion as well as for the insertion of various structures such as secretion systems and flagella. The polypeptide is Membrane-bound lytic murein transglycosylase F (Pseudomonas putida (strain GB-1)).